We begin with the raw amino-acid sequence, 148 residues long: Leghemoglobin 29 (148 aa).

The 147-residue stretch at 2 to 148 (EFTLRQEALV…LAVAIMKEMS (147 aa)) folds into the Globin domain. At tyrosine 30 the chain carries Nitrated tyrosine. Serine 45 contacts heme b. Position 45 is a phosphoserine (serine 45). An O2-binding site is contributed by histidine 63. Residues histidine 95 and lysine 98 each contribute to the heme b site. Tyrosine 136 is subject to Nitrated tyrosine.

Belongs to the plant globin family. As to quaternary structure, monomer. In terms of processing, nitrated in effective nodules and particularly in hypoxic conditions; this mechanism may play a protective role in the symbiosis by buffering toxic peroxynitrite NO(2)(-). Nitration level decrease during nodule senescence. Phosphorylation at Ser-45 disrupts the molecular environment of its porphyrin ring oxygen binding pocket, thus leading to a reduced oxygen consumption and to the delivery of oxygen O(2) to symbiosomes. Accumulates in root nodules after inoculation by bacteria of the genus Rhizobium. Expressed in mycorrhizal roots in the presence of the mycorrhizal fungus Glomus fasciculatum.

The protein localises to the cytoplasm. The protein resides in the cytosol. Its subcellular location is the nucleus. Its function is as follows. Leghemoglobin that reversibly binds oxygen O(2) through a pentacoordinated heme iron. In root nodules, facilitates the diffusion of oxygen to the bacteroids while preventing the bacterial nitrogenase from being inactivated by buffering dioxygen, nitric oxide and carbon monoxide, and promoting the formation of reactive oxygen species (ROS, e.g. H(2)O(2)). This role is essential for symbiotic nitrogen fixation (SNF). The chain is Leghemoglobin 29 from Vicia faba (Broad bean).